The following is a 304-amino-acid chain: MSQQRTLNNTIRATGVGLHSGNKIHITLRPAPVNHGIVFRRVDLDPVVEIPASGDLVTEVILCTGLTRNGAKVQTVEHLMSAFAGLGIDNAIVDLSSAELPIMDGSSAPFVFLLQSAGILEQNAAKRFIRIKRSVEVRQGDKVAKFSPYDGYKLGFTIEFDHPMIPHKQSHYEMEFSTAAYIKEISLARTFGFMHDLEDMRERNLGLGGSMDNAILLDDFRVLNEDGLRYGNEFVRHKILDAIGDLYLIGGPILGAYEAFKSGHALNNKLVRAVLADETSWEWISFPSSAAEQPPVVYTHPACI.

Positions 78, 237, and 241 each coordinate Zn(2+). Catalysis depends on H264, which acts as the Proton donor.

Belongs to the LpxC family. It depends on Zn(2+) as a cofactor.

It carries out the reaction a UDP-3-O-[(3R)-3-hydroxyacyl]-N-acetyl-alpha-D-glucosamine + H2O = a UDP-3-O-[(3R)-3-hydroxyacyl]-alpha-D-glucosamine + acetate. The protein operates within glycolipid biosynthesis; lipid IV(A) biosynthesis; lipid IV(A) from (3R)-3-hydroxytetradecanoyl-[acyl-carrier-protein] and UDP-N-acetyl-alpha-D-glucosamine: step 2/6. In terms of biological role, catalyzes the hydrolysis of UDP-3-O-myristoyl-N-acetylglucosamine to form UDP-3-O-myristoylglucosamine and acetate, the committed step in lipid A biosynthesis. In Xylella fastidiosa (strain 9a5c), this protein is UDP-3-O-acyl-N-acetylglucosamine deacetylase.